The following is a 626-amino-acid chain: Chaperone protein HtpG (626 aa).

Positions 1-329 (MSEETLSFQA…SSDLPLNVSR (329 aa)) are a; substrate-binding. Positions 330 to 549 (EMLQDDPRLR…EGAMSLHLQK (220 aa)) are b. The c stretch occupies residues 550-626 (LLRQANQGSE…LTEVMGKGLI (77 aa)).

It belongs to the heat shock protein 90 family. Homodimer.

It localises to the cytoplasm. Molecular chaperone. Has ATPase activity. This chain is Chaperone protein HtpG, found in Rhodospirillum rubrum (strain ATCC 11170 / ATH 1.1.1 / DSM 467 / LMG 4362 / NCIMB 8255 / S1).